The sequence spans 377 residues: Alanine racemase (377 aa).

Residue Lys33 is the Proton acceptor; specific for D-alanine of the active site. Lys33 bears the N6-(pyridoxal phosphate)lysine mark. Residue Arg134 coordinates substrate. Residue Tyr267 is the Proton acceptor; specific for L-alanine of the active site. Met315 is a binding site for substrate.

Belongs to the alanine racemase family. Pyridoxal 5'-phosphate serves as cofactor.

It catalyses the reaction L-alanine = D-alanine. Its pathway is amino-acid biosynthesis; D-alanine biosynthesis; D-alanine from L-alanine: step 1/1. Functionally, catalyzes the interconversion of L-alanine and D-alanine. May also act on other amino acids. The sequence is that of Alanine racemase (alr) from Treponema pallidum subsp. pallidum (strain SS14).